The following is a 291-amino-acid chain: ATP synthase gamma chain (291 aa).

The protein belongs to the ATPase gamma chain family. As to quaternary structure, F-type ATPases have 2 components, CF(1) - the catalytic core - and CF(0) - the membrane proton channel. CF(1) has five subunits: alpha(3), beta(3), gamma(1), delta(1), epsilon(1). CF(0) has three main subunits: a, b and c.

The protein localises to the cell inner membrane. Its function is as follows. Produces ATP from ADP in the presence of a proton gradient across the membrane. The gamma chain is believed to be important in regulating ATPase activity and the flow of protons through the CF(0) complex. In Burkholderia pseudomallei (strain 1106a), this protein is ATP synthase gamma chain.